Here is a 316-residue protein sequence, read N- to C-terminus: MTGQGQSAAGSAAWSAVFRHVRYENLVAGVSGGVLSNLALHPLDLVKIRFAVSDGLEVRPKYKGILHCLATIWKVDGLRGLYQGVTPNVWGAGLSWGLYFFFYNAIKSYKTEGRAEQLEPLEYLVSAAEAGAMTLCITNPLWVTKTRLMLQYGGVASPSQRQYKGMFDALVKIYKYEGVRGLYKGFVPGLFGTSHGALQFMAYELLKLKYNKHINRLPEAQLSTAEYISVAALSKIFAVAATYPYQVVRARLQDQHVSYGGVTDVITKTWRKEGIGGFYKGIAPNLIRVTPACCITFVVYENVSHFLYDLREKKVS.

3 Solcar repeats span residues 20–109 (HVRY…IKSY), 118–209 (LEPL…LKLK), and 222–306 (LSTA…VSHF). The next 6 membrane-spanning stretches (helical) occupy residues 26–46 (LVAGVSGGVLSNLALHPLDLV), 89–106 (VWGAGLSWGLYFFFYNAI), 123–143 (YLVSAAEAGAMTLCITNPLWV), 185–203 (GFVPGLFGTSHGALQFMAY), 227–243 (YISVAALSKIFAVAATY), and 281–300 (GIAPNLIRVTPACCITFVVY).

It belongs to the mitochondrial carrier (TC 2.A.29) family.

The protein resides in the mitochondrion inner membrane. It carries out the reaction FAD(in) = FAD(out). Facilitates flavin adenine dinucleotide (FAD) translocation across the mitochondrial inner membrane into the mitochondrial matrix where it acts as a redox cofactor to assist flavoenzyme activities in fundamental metabolic processes including fatty acid beta-oxidation, amino acid and choline metabolism as well as mitochondrial electron transportation. In particular, provides FAD to DLD dehydrogenase of the glycine cleavage system, part of mitochondrial one-carbon metabolic pathway involved in neural tube closure in early embryogenesis. This Mus musculus (Mouse) protein is Solute carrier family 25 member 32.